The sequence spans 137 residues: Small ribosomal subunit protein uS12 (137 aa).

The segment at 1 to 44 is disordered; that stretch reads MPTINQLVRKGRKSRTSKSDAPALNFGYNSMKKKATDNPAPQKR. Aspartate 102 is modified (3-methylthioaspartic acid).

The protein belongs to the universal ribosomal protein uS12 family. As to quaternary structure, part of the 30S ribosomal subunit. Contacts proteins S8 and S17. May interact with IF1 in the 30S initiation complex.

In terms of biological role, with S4 and S5 plays an important role in translational accuracy. Functionally, interacts with and stabilizes bases of the 16S rRNA that are involved in tRNA selection in the A site and with the mRNA backbone. Located at the interface of the 30S and 50S subunits, it traverses the body of the 30S subunit contacting proteins on the other side and probably holding the rRNA structure together. The combined cluster of proteins S8, S12 and S17 appears to hold together the shoulder and platform of the 30S subunit. The chain is Small ribosomal subunit protein uS12 from Latilactobacillus sakei subsp. sakei (strain 23K) (Lactobacillus sakei subsp. sakei).